The chain runs to 331 residues: Biotin synthase (331 aa).

A Radical SAM core domain is found at 53-271 (TELQLSQLLS…IAVARIVCPK (219 aa)). [4Fe-4S] cluster is bound by residues Cys68, Cys72, and Cys75. Residues Cys112, Cys143, Cys203, and Arg275 each coordinate [2Fe-2S] cluster.

The protein belongs to the radical SAM superfamily. Biotin synthase family. In terms of assembly, homodimer. [4Fe-4S] cluster is required as a cofactor. [2Fe-2S] cluster serves as cofactor.

It catalyses the reaction (4R,5S)-dethiobiotin + (sulfur carrier)-SH + 2 reduced [2Fe-2S]-[ferredoxin] + 2 S-adenosyl-L-methionine = (sulfur carrier)-H + biotin + 2 5'-deoxyadenosine + 2 L-methionine + 2 oxidized [2Fe-2S]-[ferredoxin]. It participates in cofactor biosynthesis; biotin biosynthesis; biotin from 7,8-diaminononanoate: step 2/2. Functionally, catalyzes the conversion of dethiobiotin (DTB) to biotin by the insertion of a sulfur atom into dethiobiotin via a radical-based mechanism. The chain is Biotin synthase from Phenylobacterium zucineum (strain HLK1).